The following is a 488-amino-acid chain: Glutamyl-tRNA(Gln) amidotransferase subunit A (488 aa).

Active-site charge relay system residues include Lys-80 and Ser-155. Ser-179 (acyl-ester intermediate) is an active-site residue.

This sequence belongs to the amidase family. GatA subfamily. In terms of assembly, heterotrimer of A, B and C subunits.

It catalyses the reaction L-glutamyl-tRNA(Gln) + L-glutamine + ATP + H2O = L-glutaminyl-tRNA(Gln) + L-glutamate + ADP + phosphate + H(+). In terms of biological role, allows the formation of correctly charged Gln-tRNA(Gln) through the transamidation of misacylated Glu-tRNA(Gln) in organisms which lack glutaminyl-tRNA synthetase. The reaction takes place in the presence of glutamine and ATP through an activated gamma-phospho-Glu-tRNA(Gln). The sequence is that of Glutamyl-tRNA(Gln) amidotransferase subunit A from Chloroflexus aggregans (strain MD-66 / DSM 9485).